The following is a 534-amino-acid chain: NAD(P)H-quinone oxidoreductase chain 4 2 (534 aa).

Transmembrane regions (helical) follow at residues F6–L26, W38–S58, L93–F113, F117–D137, L138–I158, F171–F191, I210–I230, T245–F265, F279–F299, I313–G333, M335–T355, M377–A399, and V419–M439.

This sequence belongs to the complex I subunit 4 family.

The protein localises to the cellular thylakoid membrane. The catalysed reaction is a plastoquinone + NADH + (n+1) H(+)(in) = a plastoquinol + NAD(+) + n H(+)(out). It catalyses the reaction a plastoquinone + NADPH + (n+1) H(+)(in) = a plastoquinol + NADP(+) + n H(+)(out). Its function is as follows. NDH-1 shuttles electrons from NAD(P)H, via FMN and iron-sulfur (Fe-S) centers, to quinones in the respiratory chain. The immediate electron acceptor for the enzyme in this species is believed to be plastoquinone. Couples the redox reaction to proton translocation (for every two electrons transferred, four hydrogen ions are translocated across the cytoplasmic membrane), and thus conserves the redox energy in a proton gradient. The sequence is that of NAD(P)H-quinone oxidoreductase chain 4 2 from Synechococcus elongatus (strain ATCC 33912 / PCC 7942 / FACHB-805) (Anacystis nidulans R2).